The sequence spans 59 residues: MDVKRVKQILSSSSRIDVTYEGVPVWIESCDEQSGVAQVYDVSNPGESVHVHVNALEEK.

The protein belongs to the SspH family.

Its subcellular location is the spore core. This Bacillus anthracis protein is Small, acid-soluble spore protein H 1 (sspH1).